Consider the following 237-residue polypeptide: Carbonyl reductase family member 4 (237 aa).

NADP(+)-binding positions include 11–14 (SRGI), 34–35 (RN), D57, and 84–86 (AAG). S135 is a substrate binding site. NADP(+)-binding positions include Y148, K152, and 181–183 (IHT). Catalysis depends on Y148, which acts as the Proton acceptor.

The protein belongs to the short-chain dehydrogenases/reductases (SDR) family. In terms of assembly, homotetramer (in vitro). Heterotetramer with HSD17B8; contains two molecules each of HSD17B8 and CBR4.

The protein resides in the mitochondrion matrix. It functions in the pathway lipid metabolism; fatty acid biosynthesis. Its function is as follows. The heterotetramer with HSD17B8 has NADH-dependent 3-ketoacyl-acyl carrier protein reductase activity, and thereby plays a role in mitochondrial fatty acid biosynthesis. Within the heterotetramer, HSD17B8 binds NADH; CBR4 binds NADPD. The homotetramer has NADPH-dependent quinone reductase activity. Both homotetramer and the heterotetramer have broad in vitro substrate specificity and can reduce 9,10-phenanthrenequinone, 1,4-benzoquinone and various other o-quinones and p-quinones. This Danio rerio (Zebrafish) protein is Carbonyl reductase family member 4 (cbr4).